The following is a 531-amino-acid chain: UDP-glucuronosyltransferase 1A3 (531 aa).

The first 25 residues, 1–25, serve as a signal peptide directing secretion; that stretch reads MGIQGFLQKLSGLLLLLCALPWAEG. Residues Asn-116, Asn-139, Asn-293, and Asn-431 are each glycosylated (N-linked (GlcNAc...) asparagine). A helical membrane pass occupies residues 489 to 505; the sequence is VIGFLLAIVLTVVFIVY.

This sequence belongs to the UDP-glycosyltransferase family. As to quaternary structure, homodimers. Homooligomer. Interacts with UGT1A1, UGT1A4, UGT1A6, UGT1A7, UGT1A8, UGT1A9 and UGT1A10 to form heterodimers.

The protein resides in the endoplasmic reticulum membrane. It catalyses the reaction glucuronate acceptor + UDP-alpha-D-glucuronate = acceptor beta-D-glucuronoside + UDP + H(+). The enzyme catalyses 17beta-estradiol + UDP-alpha-D-glucuronate = 17beta-estradiol 3-O-(beta-D-glucuronate) + UDP + H(+). It carries out the reaction 17beta-estradiol + UDP-alpha-D-glucuronate = 17beta-estradiol 17-O-(beta-D-glucuronate) + UDP + H(+). The catalysed reaction is 17alpha-estradiol + UDP-alpha-D-glucuronate = 17alpha-estradiol 3-O-(beta-D-glucuronate) + UDP + H(+). It catalyses the reaction estrone + UDP-alpha-D-glucuronate = estrone 3-O-(beta-D-glucuronate) + UDP + H(+). The enzyme catalyses chenodeoxycholate + UDP-alpha-D-glucuronate = chenodeoxycholoyl-24-O-(beta-D-glucuronate) + UDP. It carries out the reaction deoxycholate + UDP-alpha-D-glucuronate = deoxycholoyl-24-O-(beta-D-glucuronate) + UDP. The catalysed reaction is lithocholate + UDP-alpha-D-glucuronate = lithocholoyl-24-O-(beta-D-glucuronate) + UDP. It catalyses the reaction hyodeoxycholate + UDP-alpha-D-glucuronate = hyodeoxycholoyl-24-O-(beta-D-glucuronate) + UDP. The enzyme catalyses hyocholate + UDP-alpha-D-glucuronate = hyocholoyl-24-O-(beta-D-glucuronate) + UDP. It carries out the reaction calcidiol + UDP-alpha-D-glucuronate = calcidiol 25-O-(beta-D-glucuronide) + UDP + H(+). The catalysed reaction is losartan + UDP-alpha-D-glucuronate = losartan-2-N-beta-D-glucuronide + UDP. It catalyses the reaction candesartan + UDP-alpha-D-glucuronate = candesartan-2-N-beta-D-glucuronide + UDP. The enzyme catalyses zolasartan + UDP-alpha-D-glucuronate = zolarsartan-2-N-beta-D-glucuronide + UDP. It carries out the reaction (E)-ferulate + UDP-alpha-D-glucuronate = (E)-4-O-(beta-D-glucuronosyl)-ferulate + UDP + H(+). The catalysed reaction is (E)-ferulate + UDP-alpha-D-glucuronate = (E)-ferulic acid beta-D-glucuronate ester + UDP. UDP-glucuronosyltransferase (UGT) that catalyzes phase II biotransformation reactions in which lipophilic substrates are conjugated with glucuronic acid to increase the metabolite's water solubility, thereby facilitating excretion into either the urine or bile. Essential for the elimination and detoxification of drugs, xenobiotics and endogenous compounds. Catalyzes the glucuronidation of endogenous estrogen hormones such as estradiol and estrone. Contributes to bile acid (BA) detoxification by catalyzing the glucuronidation of BA substrates, which are natural detergents for dietary lipids absorption. Involved in the glucuronidation of calcidiol, which is the major circulating form of vitamin D3, essential for the regulation of calcium and phosphate homeostasis. Involved in the glucuronidation of the phytochemical ferulic acid at the phenolic or the carboxylic acid group. Involved in the glucuronidation of the AGTR1 angiotensin receptor antagonists losartan, candesartan and zolarsartan, which can inhibit the effect of angiotensin II. The chain is UDP-glucuronosyltransferase 1A3 from Rattus norvegicus (Rat).